A 331-amino-acid chain; its full sequence is UBX domain-containing protein 2B (331 aa).

2 stretches are compositionally biased toward basic and acidic residues: residues 1–16 (MAEGGRAEPEEQERGS) and 37–48 (DEMKCKSSKPDR). The interval 1–70 (MAEGGRAEPE…PHRLYSGDHK (70 aa)) is disordered. An N-acetylalanine modification is found at Ala-2. At Ser-56 the chain carries Phosphoserine. Thr-59 is subject to Phosphothreonine. Ser-66 is modified (phosphoserine). The SEP domain occupies 141–206 (DVQVLLKLWR…MEDHQDQEYI (66 aa)). A phosphoserine mark is found at Ser-231, Ser-234, and Ser-235. The 78-residue stretch at 252–329 (DSMPTTKIQI…DILNTVILQQ (78 aa)) folds into the UBX domain.

The protein belongs to the NSFL1C family. In terms of assembly, interacts with VCP. Does not bind ubiquitin.

The protein localises to the nucleus. Its subcellular location is the cytoplasm. It localises to the cytosol. It is found in the endoplasmic reticulum. The protein resides in the golgi apparatus. The protein localises to the cytoskeleton. Its subcellular location is the microtubule organizing center. It localises to the centrosome. Functionally, adapter protein required for Golgi and endoplasmic reticulum biogenesis. Involved in Golgi and endoplasmic reticulum maintenance during interphase and in their reassembly at the end of mitosis. The complex formed with VCP has membrane fusion activity; membrane fusion activity requires USO1-GOLGA2 tethering and BET1L. VCPIP1 is also required, but not its deubiquitinating activity. Together with NSFL1C/p47, regulates the centrosomal levels of kinase AURKA/Aurora A during mitotic progression by promoting AURKA removal from centrosomes in prophase. Also, regulates spindle orientation during mitosis. In Mus musculus (Mouse), this protein is UBX domain-containing protein 2B (Ubxn2b).